A 1135-amino-acid polypeptide reads, in one-letter code: Exportin-5 (1135 aa).

Residues S32–D117 enclose the Importin N-terminal domain. The pre-siRNA binding stretch occupies residues T630–E631.

It belongs to the exportin family. In terms of assembly, found in a nuclear export complex with RanGTP, exportin and pre-miRNA.

The protein localises to the nucleus. The protein resides in the cytoplasm. Mediates the nuclear export of proteins bearing a double-stranded RNA binding domain (dsRBD) and double-stranded RNAs (cargos). In terms of biological role, mediates the nuclear export of micro-RNA precursors, which form short hairpins. This is Exportin-5 (xpo5) from Dictyostelium discoideum (Social amoeba).